The sequence spans 185 residues: Large ribosomal subunit protein uL16m (185 aa).

This sequence belongs to the universal ribosomal protein uL16 family.

Its subcellular location is the mitochondrion. In Zea mays (Maize), this protein is Large ribosomal subunit protein uL16m (RPL16).